Reading from the N-terminus, the 515-residue chain is Nectin-1 (515 aa).

Residues 1 to 30 (MARMGLAGAAGRWWGLALGLTAFFLPGAHT) form the signal peptide. Positions 31–141 (QVVQVNDSMY…GNRESQLNLT (111 aa)) constitute an Ig-like V-type domain. Over 31–355 (QVVQVNDSMY…GRRAGQVPTA (325 aa)) the chain is Extracellular. N-linked (GlcNAc...) asparagine glycosylation is found at Asn-36, Asn-72, Asn-139, Asn-202, Asn-286, Asn-297, Asn-307, and Asn-332. A disulfide bond links Cys-51 and Cys-124. 2 Ig-like C2-type domains span residues 145-243 (KPTN…TLNV) and 247-334 (PEVT…VNIT). Disulfide bonds link Cys-172/Cys-226 and Cys-269/Cys-316. Positions 282 to 299 (WTTLNGSLPKGVEAQNRT) are interaction with FGFR. Residues 356-376 (IIGGVVGSILLVLFVVGGIVV) traverse the membrane as a helical segment. Over 377-515 (ALCRRRHTFK…SFISKKEWYV (139 aa)) the chain is Cytoplasmic. Residues 400 to 486 (YSKAGIPQHH…DGYGDRTLGY (87 aa)) are disordered. Phosphoserine occurs at positions 422, 434, and 435. Tyr-436 bears the Phosphotyrosine mark. A compositionally biased stretch (acidic residues) spans 436-445 (YEEEEEEEGG). The segment covering 446-464 (GGERKVGGPHPKYDEDAKR) has biased composition (basic and acidic residues). Ser-509 carries the post-translational modification Phosphoserine.

This sequence belongs to the nectin family. (Microbial infection) Interacts with herpes pseudorabies virus/PRV envelope glycoprotein D.

The protein resides in the cell membrane. The protein localises to the cell junction. It is found in the adherens junction. Its subcellular location is the presynaptic cell membrane. In terms of biological role, (Microbial infection) Acts as a receptor for herpes simplex virus 1/HHV-1, herpes simplex virus 2/HHV-2, and pseudorabies virus/PRV. The sequence is that of Nectin-1 from Sus scrofa (Pig).